A 254-amino-acid chain; its full sequence is Type III pantothenate kinase (254 aa).

ATP is bound at residue 13 to 20; that stretch reads MIGNTRQH. Residues tyrosine 84 and 88-91 each bind substrate; that span reads GLDR. The Proton acceptor role is filled by aspartate 90. A K(+)-binding site is contributed by aspartate 110. Threonine 113 is a binding site for ATP. Threonine 166 contributes to the substrate binding site.

This sequence belongs to the type III pantothenate kinase family. As to quaternary structure, homodimer. The cofactor is NH4(+). K(+) serves as cofactor.

It is found in the cytoplasm. It carries out the reaction (R)-pantothenate + ATP = (R)-4'-phosphopantothenate + ADP + H(+). It participates in cofactor biosynthesis; coenzyme A biosynthesis; CoA from (R)-pantothenate: step 1/5. Functionally, catalyzes the phosphorylation of pantothenate (Pan), the first step in CoA biosynthesis. The polypeptide is Type III pantothenate kinase (Thermosynechococcus vestitus (strain NIES-2133 / IAM M-273 / BP-1)).